The following is a 535-amino-acid chain: 4-hydroxy-3-methylbut-2-enyl diphosphate reductase, apicoplast (535 aa).

Cysteine 231 contributes to the [4Fe-4S] cluster binding site. Residues histidine 260 and histidine 293 each contribute to the (2E)-4-hydroxy-3-methylbut-2-enyl diphosphate site. The dimethylallyl diphosphate site is built by histidine 260 and histidine 293. Isopentenyl diphosphate-binding residues include histidine 260 and histidine 293. Cysteine 315 contributes to the [4Fe-4S] cluster binding site. Histidine 343 lines the (2E)-4-hydroxy-3-methylbut-2-enyl diphosphate pocket. Histidine 343 is a dimethylallyl diphosphate binding site. Isopentenyl diphosphate is bound at residue histidine 343. Glutamate 345 functions as the Proton donor in the catalytic mechanism. Threonine 383 serves as a coordination point for (2E)-4-hydroxy-3-methylbut-2-enyl diphosphate. Cysteine 413 contacts [4Fe-4S] cluster. Residues serine 441, serine 442, asparagine 443, and serine 485 each contribute to the (2E)-4-hydroxy-3-methylbut-2-enyl diphosphate site. Residues serine 441, serine 442, asparagine 443, and serine 485 each contribute to the dimethylallyl diphosphate site. The isopentenyl diphosphate site is built by serine 441, serine 442, asparagine 443, and serine 485.

This sequence belongs to the IspH family. Interacts with Fd/ferredoxin. Requires [4Fe-4S] cluster as cofactor.

Its subcellular location is the plastid. It is found in the apicoplast. The enzyme catalyses dimethylallyl diphosphate + 2 oxidized [2Fe-2S]-[ferredoxin] + H2O = (2E)-4-hydroxy-3-methylbut-2-enyl diphosphate + 2 reduced [2Fe-2S]-[ferredoxin] + 2 H(+). It carries out the reaction isopentenyl diphosphate + 2 oxidized [2Fe-2S]-[ferredoxin] + H2O = (2E)-4-hydroxy-3-methylbut-2-enyl diphosphate + 2 reduced [2Fe-2S]-[ferredoxin] + 2 H(+). It functions in the pathway isoprenoid biosynthesis; dimethylallyl diphosphate biosynthesis; dimethylallyl diphosphate from (2E)-4-hydroxy-3-methylbutenyl diphosphate: step 1/1. The protein operates within isoprenoid biosynthesis; isopentenyl diphosphate biosynthesis via DXP pathway; isopentenyl diphosphate from 1-deoxy-D-xylulose 5-phosphate: step 6/6. Its function is as follows. Catalyzes the conversion of 1-hydroxy-2-methyl-2-(E)-butenyl 4-diphosphate (HMBPP) into a mixture of isopentenyl diphosphate (IPP) and dimethylallyl diphosphate (DMAPP). Acts in the terminal step of the DOXP/MEP pathway for isoprenoid precursor biosynthesis. This Plasmodium falciparum (isolate 3D7) protein is 4-hydroxy-3-methylbut-2-enyl diphosphate reductase, apicoplast.